A 207-amino-acid chain; its full sequence is Thiamine-phosphate synthase (207 aa).

Residues Gln35–Lys39 and Asn67 contribute to the 4-amino-2-methyl-5-(diphosphooxymethyl)pyrimidine site. Residues Asp68 and Asp86 each contribute to the Mg(2+) site. Thr105 serves as a coordination point for 4-amino-2-methyl-5-(diphosphooxymethyl)pyrimidine. Residue Ser132–Thr134 participates in 2-[(2R,5Z)-2-carboxy-4-methylthiazol-5(2H)-ylidene]ethyl phosphate binding. Residue Lys135 participates in 4-amino-2-methyl-5-(diphosphooxymethyl)pyrimidine binding. Gly162 contacts 2-[(2R,5Z)-2-carboxy-4-methylthiazol-5(2H)-ylidene]ethyl phosphate.

It belongs to the thiamine-phosphate synthase family. Mg(2+) is required as a cofactor.

It carries out the reaction 2-[(2R,5Z)-2-carboxy-4-methylthiazol-5(2H)-ylidene]ethyl phosphate + 4-amino-2-methyl-5-(diphosphooxymethyl)pyrimidine + 2 H(+) = thiamine phosphate + CO2 + diphosphate. The catalysed reaction is 2-(2-carboxy-4-methylthiazol-5-yl)ethyl phosphate + 4-amino-2-methyl-5-(diphosphooxymethyl)pyrimidine + 2 H(+) = thiamine phosphate + CO2 + diphosphate. It catalyses the reaction 4-methyl-5-(2-phosphooxyethyl)-thiazole + 4-amino-2-methyl-5-(diphosphooxymethyl)pyrimidine + H(+) = thiamine phosphate + diphosphate. It participates in cofactor biosynthesis; thiamine diphosphate biosynthesis; thiamine phosphate from 4-amino-2-methyl-5-diphosphomethylpyrimidine and 4-methyl-5-(2-phosphoethyl)-thiazole: step 1/1. In terms of biological role, condenses 4-methyl-5-(beta-hydroxyethyl)thiazole monophosphate (THZ-P) and 2-methyl-4-amino-5-hydroxymethyl pyrimidine pyrophosphate (HMP-PP) to form thiamine monophosphate (TMP). The protein is Thiamine-phosphate synthase of Pseudomonas putida (strain W619).